The following is a 219-amino-acid chain: Transmembrane emp24 domain-containing protein 10 (219 aa).

Positions 1-31 (MSGLSGPPTRRGPFPLALLLLFLLGPSLVLA) are cleaved as a signal peptide. Residues 1 to 142 (MSGLSGPPTR…KNYEEIAKVE (142 aa)) are required for interaction with STX17. The Lumenal segment spans residues 32-185 (ISFHLPINSR…RDTNESTNTR (154 aa)). The region spanning 41–193 (RKCLREEIHK…TRVLYFSIFS (153 aa)) is the GOLD domain. Dimethylated arginine is present on residues Arg171 and Arg176. N-linked (GlcNAc...) asparagine glycosylation occurs at Asn179. The chain crosses the membrane as a helical span at residues 186–206 (VLYFSIFSMFCLIGLATWQVF). The interaction with COPG1 stretch occupies residues 204–219 (QVFYLRRFFKAKKLIE). Topologically, residues 207 to 219 (YLRRFFKAKKLIE) are cytoplasmic. The tract at residues 207-219 (YLRRFFKAKKLIE) is interaction with ARF1 and IL1B. A COPII vesicle coat-binding motif is present at residues 211–212 (FF). Residues 211–219 (FFKAKKLIE) carry the COPI vesicle coat-binding motif.

Belongs to the EMP24/GP25L family. As to quaternary structure, predominantly dimeric and to a lesser extent monomeric in the ER. Monomer and dimer in ERGIC and cis-Golgi network. Forms homooligomer (via GOLD domain); the assembly is promoted by direct binding with leaderless cargos and may form a protein channel that facilitates cargo entry into the ERGIC. Forms heterooligomeric complexes with other members of the p24 family such as TMED2, TMED7 and TMED9. Interacts (via GOLD domain) with TMED2 (via GOLD domain); the complex is required for export of TMED10 from the ER to the cis-Golgi network; the complex is proposed to be involved in cis-Golgi network dynamics and / or biogenesis. Associates with the COPI vesicle coat subunits (coatomer). Tetramerization of the cytoplasmic domain at the Golgi membrane in vitro; the complex is proposed to interact with COPI coatomer and induce budding of the vesicles. Interacts with COPG1; the interaction involves TMED10 homodimer. Interacts with ARF1 (GDP-bound); the interaction probably involves a TMED10 oligomer. Interacts with SEC23A, SEC24B, SEC24C and SEC24D components of the coat protein complex II/COPII, indicative of an association of TMED10 with the COPII vesicle coat. Interacts with CD59. Interacts with MPPE1/PGAP5; the complex might recruit and sort GPI-anchored proteins to the ER-exit site, or the interaction might lead to recycling of PGAP5 between the ER and the Golgi. Interacts with F2LR1/PAR2. Interacts with KDELR2/ERD2; the interaction is disrupted by KDELR2 ligand. Found in a complex composed at least of SURF4, TMED2 and TMED10. Associates with the presenilin-dependent gamma-secretase complex. Interacts with STX17; the interaction is direct. Interacts with IL-1; the interaction is direct. Interacts with RAB21 (active GTP-bound form); the interaction is indirect and regulates TMED10 abundance and localization at the Golgi.

It is found in the endoplasmic reticulum membrane. It localises to the endoplasmic reticulum-Golgi intermediate compartment membrane. The protein resides in the golgi apparatus membrane. Its subcellular location is the golgi apparatus. The protein localises to the cis-Golgi network membrane. It is found in the trans-Golgi network membrane. It localises to the cytoplasmic vesicle. The protein resides in the secretory vesicle membrane. Its subcellular location is the cell membrane. The protein localises to the melanosome. Functionally, cargo receptor involved in protein vesicular trafficking and quality control in the endoplasmic reticulum (ER) and Golgi. The p24 protein family is a group of transmembrane proteins that bind coat protein complex I/COPI and coat protein complex II/COPII involved in vesicular trafficking between the membranes. Acts at the lumenal side for incorporation of secretory cargo molecules into transport vesicles and involved in vesicle coat formation at the cytoplasmic side. Mainly functions in the early secretory pathway and cycles between the ER, ER-Golgi intermediate compartment (ERGIC) and Golgi, mediating cargo transport through COPI and COPII-coated vesicles. In COPII vesicle-mediated anterograde transport, involved in the transport of GPI-anchored proteins by acting together with TMED2 as their cargo receptor; the function specifically implies SEC24C and SEC24D of the COPII vesicle coat and lipid raft-like microdomains of the ER. Recognizes GPI anchors structural remodeled in the ER by the GPI inositol-deacylase/PGAP1 and the metallophosphoesterase MPPE1/PGAP5. In COPI vesicle-mediated retrograde transport, involved in the biogenesis of COPI vesicles and vesicle coat recruitment. Involved in trafficking of amyloid beta A4 protein and soluble APP-beta release (independent from the modulation of gamma-secretase activity). Involved in the KDELR2-mediated retrograde transport of the toxin A subunit (CTX-A-K63)together with COPI and the COOH terminus of KDELR2. On Golgi membranes, acts as a primary receptor for ARF1-GDP, a GTP-binding protein involved in COPI-vesicle formation. Increases coatomer-dependent GTPase-activating activity of ARFGAP2 which mediates the hydrolysis of ARF1-bound GTP and therefore modulates protein trafficking from the Golgi apparatus. Involved in the exocytic trafficking of G protein-coupled receptors F2LR1/PAR2 (trypsin and tryspin-like enzyme receptor), OPRM1 (opioid receptor) and P2RY4 (UTD and UDP receptor) from the Golgi to the plasma membrane, thus contributing to receptor resensitization. In addition to its cargo receptor activity, may also act as a protein channel after oligomerization, facilitating the post-translational entry of leaderless cytoplasmic cargo into the ERGIC. Involved in the translocation into ERGIC, the vesicle entry and the secretion of leaderless cargos (lacking the secretion signal sequence), including the mature form of interleukin 1/IL-1 family members, the alpha-crystallin B chain HSPB5, the carbohydrate-binding proteins galectin-1/LGALS1 and galectin-3/LGALS3, the microtubule-associated protein Tau/MAPT, and the annexin A1/ANXA1; the translocation process is dependent on cargo protein unfolding and enhanced by chaperones HSP90AB1 and HSP90B1/GRP9. Could also associates with the presenilin-dependent gamma-secretase complex in order to regulate gamma-cleavages of the amyloid beta A4 protein to yield amyloid-beta 40/Abeta40. The sequence is that of Transmembrane emp24 domain-containing protein 10 (TMED10) from Pongo abelii (Sumatran orangutan).